A 1014-amino-acid chain; its full sequence is DNA translocase FtsK 2 (1014 aa).

Residues 1–21 (MFWIVLIVILLLALAGLFFVR) form a helical membrane-spanning segment. Disordered regions lie at residues 89-142 (ESEP…EDIA), 283-318 (RHAGQGKGQAEAKSPDVSQGQSVSDGTAVRDARRRV), and 487-525 (SQAVCPFENVPSERPSRRASDTEADEGAFQSEETGAVSE). Over residues 121 to 140 (EEAETEEAEAAEEEAADTED) the composition is skewed to acidic residues. The span at 298-307 (DVSQGQSVSD) shows a compositional bias: polar residues. Positions 662–871 (GQPVVTDLGK…FQVSSKIDSR (210 aa)) constitute a FtsK domain. 682 to 687 (GSGKSV) contributes to the ATP binding site.

This sequence belongs to the FtsK/SpoIIIE/SftA family. In terms of assembly, homohexamer. Forms a ring that surrounds DNA.

Its subcellular location is the cell inner membrane. Its function is as follows. Essential cell division protein that coordinates cell division and chromosome segregation. The N-terminus is involved in assembly of the cell-division machinery. The C-terminus functions as a DNA motor that moves dsDNA in an ATP-dependent manner towards the dif recombination site, which is located within the replication terminus region. Translocation stops specifically at Xer-dif sites, where FtsK interacts with the Xer recombinase, allowing activation of chromosome unlinking by recombination. FtsK orienting polar sequences (KOPS) guide the direction of DNA translocation. FtsK can remove proteins from DNA as it translocates, but translocation stops specifically at XerCD-dif site, thereby preventing removal of XerC and XerD from dif. This Neisseria meningitidis serogroup A / serotype 4A (strain DSM 15465 / Z2491) protein is DNA translocase FtsK 2 (ftsK2).